The following is a 465-amino-acid chain: Cysteine--tRNA ligase (465 aa).

Cys27 lines the Zn(2+) pocket. Positions 29–39 (PTVYNFFHIGN) match the 'HIGH' region motif. Zn(2+) is bound by residues Cys207, His232, and Glu236. The 'KMSKS' region motif lies at 264–268 (KMSKS). Residue Lys267 coordinates ATP.

Belongs to the class-I aminoacyl-tRNA synthetase family. As to quaternary structure, monomer. Requires Zn(2+) as cofactor.

The protein resides in the cytoplasm. The enzyme catalyses tRNA(Cys) + L-cysteine + ATP = L-cysteinyl-tRNA(Cys) + AMP + diphosphate. In Clostridium kluyveri (strain NBRC 12016), this protein is Cysteine--tRNA ligase.